The primary structure comprises 520 residues: Hydroxymethylglutaryl-CoA synthase, cytoplasmic (520 aa).

S4 carries the phosphoserine modification. The (3S)-3-hydroxy-3-methylglutaryl-CoA site is built by D43 and A44. 44 to 46 is a binding site for CoA; the sequence is AGK. K46 is modified (N6-acetyllysine). E95 acts as the Proton donor/acceptor in catalysis. (3S)-3-hydroxy-3-methylglutaryl-CoA is bound by residues C129, N167, T171, S221, and H264. The active-site Acyl-thioester intermediate is C129. Residue N167 participates in CoA binding. S221 contacts CoA. Catalysis depends on H264, which acts as the Proton donor/acceptor. CoA-binding residues include K269 and K273. (3S)-3-hydroxy-3-methylglutaryl-CoA-binding residues include K273, N343, and S377. Residue K273 is modified to N6-acetyllysine. T476 is subject to Phosphothreonine. Residues 492–520 form a disordered region; the sequence is HIPSPAKKVPRLPATAAEPEAAVISNGEH. Phosphoserine occurs at positions 495 and 516.

Belongs to the thiolase-like superfamily. HMG-CoA synthase family. As to quaternary structure, homodimer.

It is found in the cytoplasm. The enzyme catalyses acetoacetyl-CoA + acetyl-CoA + H2O = (3S)-3-hydroxy-3-methylglutaryl-CoA + CoA + H(+). It functions in the pathway metabolic intermediate biosynthesis; (R)-mevalonate biosynthesis; (R)-mevalonate from acetyl-CoA: step 2/3. Catalyzes the condensation of acetyl-CoA with acetoacetyl-CoA to form HMG-CoA, which is converted by HMG-CoA reductase (HMGCR) into mevalonate, a precursor for cholesterol synthesis. This is Hydroxymethylglutaryl-CoA synthase, cytoplasmic from Homo sapiens (Human).